Consider the following 281-residue polypeptide: D-arabinitol 2-dehydrogenase [ribulose-forming] (281 aa).

2 residues coordinate NADP(+): leucine 31 and asparagine 52. Serine 169 acts as the Proton donor in catalysis. Residues tyrosine 184, lysine 188, isoleucine 217, and threonine 219 each contribute to the NADP(+) site. The active-site Proton acceptor is tyrosine 184. The active-site Lowers pKa of active site Tyr is lysine 188.

It belongs to the short-chain dehydrogenases/reductases (SDR) family.

It catalyses the reaction D-arabinitol + NAD(+) = D-ribulose + NADH + H(+). It functions in the pathway carbohydrate metabolism; D-arabinitol metabolism. The sequence is that of D-arabinitol 2-dehydrogenase [ribulose-forming] (ARD1) from Candida albicans (strain WO-1) (Yeast).